A 250-amino-acid polypeptide reads, in one-letter code: Archaeal flagellar motor scaffold protein FlaX (250 aa).

Residues 1–9 (MAIQDLLQS) are Extracellular-facing. Residues 10 to 30 (SLFIILIGVGIPIAAFLEILF) form a helical membrane-spanning segment. The Cytoplasmic segment spans residues 31–250 (RVILPKTKRV…MILEGGGVNG (220 aa)). The span at 42-61 (TQQSPQNISQEQRFPTQQKP) shows a compositional bias: polar residues. A disordered region spans residues 42 to 72 (TQQSPQNISQEQRFPTQQKPANDETSKYSSD). Positions 62–72 (ANDETSKYSSD) are enriched in basic and acidic residues.

The S.acidocaldarius archaellum assembly machinery and its filament consist of seven proteins (FlaB, FlaF, FlaG, FlaH, FlaI, FlaJ and FlaX). FlaX assembles into ring-shaped oligomers. Interacts directly with FlaH and the motor ATPase FlaI.

The protein localises to the archaeal flagellum. Its subcellular location is the cell membrane. Its activity is regulated as follows. The presence of the flagellar core components FlaH, FlaI and FlaJ seems to be crucial for the stability of FlaX. Its function is as follows. Component of the archaellum. FlaX, FlaH and FlaI form the core cytoplasmic motor complex of the crenarchaeal archaellum. FlaX forms a ring that may act as a membrane-bound cytoplasmic scaffold that guides the assembly of the archaellum motor complex. Is essential for archaellum assembly. The chain is Archaeal flagellar motor scaffold protein FlaX from Sulfolobus acidocaldarius (strain ATCC 33909 / DSM 639 / JCM 8929 / NBRC 15157 / NCIMB 11770).